The following is a 424-amino-acid chain: UDP-N-acetylglucosamine 1-carboxyvinyltransferase (424 aa).

22-23 (KN) contributes to the phosphoenolpyruvate binding site. Arg-93 contributes to the UDP-N-acetyl-alpha-D-glucosamine binding site. Cys-117 functions as the Proton donor in the catalytic mechanism. At Cys-117 the chain carries 2-(S-cysteinyl)pyruvic acid O-phosphothioketal. UDP-N-acetyl-alpha-D-glucosamine-binding positions include 122–126 (RPIDL), Asp-307, and Val-329.

It belongs to the EPSP synthase family. MurA subfamily.

The protein localises to the cytoplasm. It carries out the reaction phosphoenolpyruvate + UDP-N-acetyl-alpha-D-glucosamine = UDP-N-acetyl-3-O-(1-carboxyvinyl)-alpha-D-glucosamine + phosphate. The protein operates within cell wall biogenesis; peptidoglycan biosynthesis. Its function is as follows. Cell wall formation. Adds enolpyruvyl to UDP-N-acetylglucosamine. This chain is UDP-N-acetylglucosamine 1-carboxyvinyltransferase, found in Chlorobium limicola (strain DSM 245 / NBRC 103803 / 6330).